Consider the following 77-residue polypeptide: Neurotoxin LmNaTx21.1 (77 aa).

The N-terminal stretch at 1–7 (LILVACL) is a signal peptide. Residues 16–76 (KDGYPVDWNN…VEIKGYGRCR (61 aa)) enclose the LCN-type CS-alpha/beta domain. Intrachain disulfides connect Cys26/Cys75, Cys30/Cys51, Cys37/Cys58, and Cys41/Cys60.

This sequence belongs to the long (4 C-C) scorpion toxin superfamily. Sodium channel inhibitor family. Alpha subfamily. In terms of tissue distribution, expressed by the venom gland.

The protein resides in the secreted. Functionally, binds voltage-independently at site-3 of voltage-gated sodium channels (Nav) and inhibits the inactivation of the activated channels, thereby blocking neuronal transmission. This Lychas mucronatus (Chinese swimming scorpion) protein is Neurotoxin LmNaTx21.1.